The following is a 930-amino-acid chain: A disintegrin and metalloproteinase with thrombospondin motifs 5 (930 aa).

Residues 1–21 (MRLEWAPLLLLLLLLSASCLS) form the signal peptide. Residues 22–261 (LAADSPAAAP…PQTWWRRRRR (240 aa)) constitute a propeptide that is removed on maturation. The segment covering 31 to 53 (PAQDKTRQPQAAAAAAEPDQPQG) has biased composition (low complexity). Disordered regions lie at residues 31-68 (PAQD…LAGQ) and 207-231 (ASCE…SRRR). Residues 207 to 214 (ASCETPAS) carry the Cysteine switch motif. Residue Cys-209 coordinates Zn(2+). Residues 211–225 (TPASPSGPQESPSVH) are compositionally biased toward polar residues. In terms of domain architecture, Peptidase M12B spans 267–476 (RQVELLLVAD…GHGNCLLDLP (210 aa)). Cystine bridges form between Cys-342/Cys-394, Cys-371/Cys-376, Cys-388/Cys-471, Cys-426/Cys-455, Cys-497/Cys-519, Cys-508/Cys-529, Cys-514/Cys-548, and Cys-542/Cys-553. Zn(2+) is bound at residue His-410. The active site involves Glu-411. Positions 414 and 420 each coordinate Zn(2+). In terms of domain architecture, Disintegrin spans 485-566 (ELPGQTYDAT…TKKKYYSTSS (82 aa)). A glycan (N-linked (GlcNAc...) asparagine) is linked at Asn-498. Positions 567 to 622 (HGNWGSWGPWGQCSRSCGGGVQFAYRHCNNPAPRNSGRYCTGKRAIYRSCSVTPCP) constitute a TSP type-1 1 domain. C-linked (Man) tryptophan glycans are attached at residues Trp-570 and Trp-573. 3 cysteine pairs are disulfide-bonded: Cys-579-Cys-616, Cys-583-Cys-621, and Cys-594-Cys-606. Residue Ser-582 is glycosylated (O-linked (Fuc...) serine). 3 N-linked (GlcNAc...) asparagine glycosylation sites follow: Asn-728, Asn-802, and Asn-807. The interval 732–874 (TKIIGTFNKK…HGSNKVGPHS (143 aa)) is spacer. Residues 875–929 (TQLQWVTGPWLACSRTCDTGWHTRTVQCQDGNRKLAKGCLLSQRPSAFKQCLLKK) form the TSP type-1 2 domain.

Zn(2+) is required as a cofactor. Post-translationally, the precursor is cleaved by furin and PCSK7 outside of the cell. Glycosylated. Can be O-fucosylated by POFUT2 on a serine or a threonine residue found within the consensus sequence C1-X(2)-(S/T)-C2-G of the TSP type-1 repeat domains where C1 and C2 are the first and second cysteine residue of the repeat, respectively. Fucosylated repeats can then be further glycosylated by the addition of a beta-1,3-glucose residue by the glucosyltransferase, B3GALTL. Fucosylation mediates the efficient secretion of ADAMTS family members. Can also be C-glycosylated with one or two mannose molecules on tryptophan residues within the consensus sequence W-X-X-W of the TPRs, and N-glycosylated. These other glycosylations can also facilitate secretion. As to expression, expressed in skeletal muscle.

It localises to the secreted. The protein resides in the extracellular space. It is found in the extracellular matrix. Functionally, metalloproteinase that plays an important role in connective tissue organization, development, inflammation and cell migration. Extracellular matrix (ECM) degrading enzyme that shows proteolytic activity toward the hyalectan group of chondroitin sulfate proteoglycans (CSPGs) including ACAN, VCAN, BCAN and NCAN. Cleavage within the hyalectans occurs at Glu-Xaa recognition motifs. Plays a role in embryonic development, including limb and cardiac morphogenesis, and skeletal muscle development through its VCAN remodeling properties. Cleaves VCAN in the pericellular matrix surrounding myoblasts, facilitating myoblast contact and fusion which is required for skeletal muscle development and regeneration. Participates in the development of brown adipose tissue and browning of white adipose tissue. Plays an important role for T-lymphocyte migration from draining lymph nodes following viral infection. In Mus musculus (Mouse), this protein is A disintegrin and metalloproteinase with thrombospondin motifs 5 (Adamts5).